A 334-amino-acid polypeptide reads, in one-letter code: Glucosyltransferase 3 (334 aa).

Residues Thr-16, Arg-179, and 249-254 (SHKSAT) each bind UDP.

This sequence belongs to the Gtf3 glucosyltransferase family. As to quaternary structure, homotetramer; a dimer of dimers.

It functions in the pathway protein modification; protein glycosylation. Functionally, required for polymorphic O-glycosylation of the serine-rich repeat protein in this bacteria. Catalyzes the second step in glycosylation by transferring glucose from UDP-glucose to the terminal GlcNAc moiety of the 3-O-(N-acetyl-alpha-D-glucosaminyl)-L-seryl-[protein] resulting from the first glycosylation step. Its function is as follows. Part of the accessory SecA2/SecY2 system specifically required to export GspB, a serine-rich repeat cell wall protein encoded upstream in the same operon. The protein is Glucosyltransferase 3 of Streptococcus gordonii.